A 74-amino-acid chain; its full sequence is Cytochrome c oxidase copper chaperone 1 (74 aa).

The interval 1-30 (MTDQPAQNGLIPPPTSEPSKAAASAETKPK) is disordered. 2 residues coordinate Cu cation: Cys34 and Cys35. The 41-residue stretch at 34–74 (CCACPDTKKLRDECIVEHGESACTKWIEAHKICLRAEGFNV) folds into the CHCH domain. Short sequence motifs (cx9C motif) lie at residues 37 to 47 (CPDTKKLRDEC) and 56 to 66 (CTKWIEAHKIC). Disulfide bonds link Cys37–Cys66 and Cys47–Cys56.

Belongs to the COX17 family.

The protein resides in the mitochondrion intermembrane space. Its function is as follows. Copper chaperone for cytochrome c oxidase (COX). Binds 2 copper ions and delivers them to the Cu(A) site of COX. Can complement the yeast mutant cox17. The sequence is that of Cytochrome c oxidase copper chaperone 1 (COX17-1) from Arabidopsis thaliana (Mouse-ear cress).